The chain runs to 199 residues: BREX protein BrxA (199 aa).

It belongs to the BrxA family.

Functionally, BREX systems (bacteriophage exclusion) provide immunity against bacteriophage. Part of a type 1 BREX system which protects against dsDNA phage. This system allows phage adsorption but prevents phage DNA replication, without degradation of the phage DNA. Methylation of bacterial DNA by PglX guides self/non-self discrimination. This Paramagnetospirillum magneticum (strain ATCC 700264 / AMB-1) (Magnetospirillum magneticum) protein is BREX protein BrxA.